The chain runs to 62 residues: Photosystem II reaction center protein Z (62 aa).

2 helical membrane passes run Ala8–Ala28 and Phe41–Ile61.

Belongs to the PsbZ family. In terms of assembly, PSII is composed of 1 copy each of membrane proteins PsbA, PsbB, PsbC, PsbD, PsbE, PsbF, PsbH, PsbI, PsbJ, PsbK, PsbL, PsbM, PsbT, PsbY, PsbZ, Psb30/Ycf12, at least 3 peripheral proteins of the oxygen-evolving complex and a large number of cofactors. It forms dimeric complexes.

The protein localises to the plastid. It is found in the chloroplast thylakoid membrane. Its function is as follows. May control the interaction of photosystem II (PSII) cores with the light-harvesting antenna, regulates electron flow through the 2 photosystem reaction centers. PSII is a light-driven water plastoquinone oxidoreductase, using light energy to abstract electrons from H(2)O, generating a proton gradient subsequently used for ATP formation. The sequence is that of Photosystem II reaction center protein Z from Vitis vinifera (Grape).